A 1081-amino-acid polypeptide reads, in one-letter code: FHF complex subunit HOOK-interacting protein 1A (1081 aa).

4 disordered regions span residues 474 to 496 (SEEQ…PPPA), 544 to 623 (PETF…DPPK), 658 to 770 (EKDT…ENEP), and 863 to 883 (EAGS…RHPV). Over residues 486–496 (PSSPSPPPPPA) the composition is skewed to pro residues. A compositionally biased stretch (basic and acidic residues) spans 553 to 564 (EESRENSGHPEA). Polar residues predominate over residues 567–576 (PQQSVRTSGQ). The segment covering 680-707 (EPLEDTSEQQEDTSEQLEDTSELQEDTA) has biased composition (acidic residues). Polar residues-rich tracts occupy residues 727-738 (EAQSLPTSNGPL) and 746-762 (ESQP…NTFS).

It belongs to the FHIP family. As to quaternary structure, may be a component of the FTS/Hook/FHIP complex (FHF complex), composed of AKTIP/FTS, FHIP1B, and one or more members of the Hook family of proteins HOOK1, HOOK2, and HOOK3. May interact directly with AKTIP/FTS.

In terms of biological role, probable component of the FTS/Hook/FHIP complex (FHF complex). FHF complex promotes the distribution of AP-4 complex to the perinuclear area of the cell. The sequence is that of FHF complex subunit HOOK-interacting protein 1A from Mus musculus (Mouse).